A 507-amino-acid polypeptide reads, in one-letter code: tRNA(Ile)-lysidine synthase (507 aa).

24 to 29 (SGGGDS) is a binding site for ATP. Residues 370–500 (PPEEAHMAEA…KLLRDFFARL (131 aa)) enclose the CMP/dCMP-type deaminase domain. Zn(2+) contacts are provided by H420, C445, and C448.

It belongs to the tRNA(Ile)-lysidine synthase family.

The protein localises to the cytoplasm. The enzyme catalyses cytidine(34) in tRNA(Ile2) + L-lysine + ATP = lysidine(34) in tRNA(Ile2) + AMP + diphosphate + H(+). Functionally, ligates lysine onto the cytidine present at position 34 of the AUA codon-specific tRNA(Ile) that contains the anticodon CAU, in an ATP-dependent manner. Cytidine is converted to lysidine, thus changing the amino acid specificity of the tRNA from methionine to isoleucine. This is tRNA(Ile)-lysidine synthase (tilS) from Thermus thermophilus (strain ATCC 27634 / DSM 579 / HB8).